Here is a 581-residue protein sequence, read N- to C-terminus: Phosphatidylinositol N-acetylglucosaminyltransferase subunit Q (581 aa).

5 consecutive transmembrane segments (helical) span residues 276-298 (ANML…WLHS), 344-366 (LGRF…SPFI), 381-403 (LTVA…YCFY), 446-468 (LFIG…LYYL), and 478-500 (ITVQ…YSLG).

The protein belongs to the PIGQ family. As to quaternary structure, component of the glycosylphosphatidylinositol-N-acetylglucosaminyltransferase (GPI-GnT) complex composed at least by PIGA, PIGC, PIGH, PIGP, PIGQ, PIGY and DPM2. Interacts with PIGA, PIGH and PIGC.

It is found in the membrane. It participates in glycolipid biosynthesis; glycosylphosphatidylinositol-anchor biosynthesis. Part of the glycosylphosphatidylinositol-N-acetylglucosaminyltransferase (GPI-GnT) complex that catalyzes the transfer of N-acetylglucosamine from UDP-N-acetylglucosamine to phosphatidylinositol and participates in the first step of GPI biosynthesis. In Mus musculus (Mouse), this protein is Phosphatidylinositol N-acetylglucosaminyltransferase subunit Q.